Reading from the N-terminus, the 275-residue chain is Large ribosomal subunit protein uL2 (275 aa).

Disordered stretches follow at residues 38 to 59 and 222 to 275; these read KKHAGRNNHGHITTRHRGGGHK and GSAM…RKQK. Basic residues-rich tracts occupy residues 39-59 and 254-275; these read KHAGRNNHGHITTRHRGGGHK and MGKKTRHNPRTQRFIVRTRKQK.

It belongs to the universal ribosomal protein uL2 family. In terms of assembly, part of the 50S ribosomal subunit. Forms a bridge to the 30S subunit in the 70S ribosome.

One of the primary rRNA binding proteins. Required for association of the 30S and 50S subunits to form the 70S ribosome, for tRNA binding and peptide bond formation. It has been suggested to have peptidyltransferase activity; this is somewhat controversial. Makes several contacts with the 16S rRNA in the 70S ribosome. This is Large ribosomal subunit protein uL2 from Herpetosiphon aurantiacus (strain ATCC 23779 / DSM 785 / 114-95).